The chain runs to 271 residues: MKTELKAVLKRPKISEKFDELREKKEGALIGYVMAGDPTFEASSEVVKALAKGGADIIELGFPFSDPVADGPTIQVAGQRALAEGMDIERYFAFARALEVDVPLVCMTYYNPVFRYGVEKFVENAAEAGISGLIIPDIPVEEAADLKTGCDAHGLDLIFLVAPTTTEARIRKILQRGSGFIYLVSRLGVTGARDDVAGSTKELLSRVNTDIPKAVGFGISTGEQAAEVRKAGADGVIVGSAFVRIIEEGTDVNERLETLARELKSGMLEAN.

Residues glutamate 59 and aspartate 70 each act as proton acceptor in the active site.

It belongs to the TrpA family. As to quaternary structure, tetramer of two alpha and two beta chains.

The catalysed reaction is (1S,2R)-1-C-(indol-3-yl)glycerol 3-phosphate + L-serine = D-glyceraldehyde 3-phosphate + L-tryptophan + H2O. Its pathway is amino-acid biosynthesis; L-tryptophan biosynthesis; L-tryptophan from chorismate: step 5/5. Functionally, the alpha subunit is responsible for the aldol cleavage of indoleglycerol phosphate to indole and glyceraldehyde 3-phosphate. In Methanosarcina mazei (strain ATCC BAA-159 / DSM 3647 / Goe1 / Go1 / JCM 11833 / OCM 88) (Methanosarcina frisia), this protein is Tryptophan synthase alpha chain.